The sequence spans 217 residues: UPF0323 lipoprotein HPP12_0232 (217 aa).

Residues 1 to 27 form the signal peptide; it reads MKKPYRKISDYAIVGGLSALVMVSIVG. The N-palmitoyl cysteine moiety is linked to residue Cys28. Residue Cys28 is the site of S-diacylglycerol cysteine attachment. Residues 160–171 are compositionally biased toward polar residues; sequence QRTYKSPQAYQR. The segment at 160–217 is disordered; it reads QRTYKSPQAYQRSQNSFSKSAPSASSMGTASKGQSGFFGSSRPTSSPAISSGTRGFNS. The segment covering 172 to 185 has biased composition (low complexity); that stretch reads SQNSFSKSAPSASS. The segment covering 186–197 has biased composition (polar residues); it reads MGTASKGQSGFF. Over residues 199–210 the composition is skewed to low complexity; it reads SSRPTSSPAISS.

This sequence belongs to the UPF0323 family.

The protein resides in the cell membrane. The chain is UPF0323 lipoprotein HPP12_0232 from Helicobacter pylori (strain P12).